Reading from the N-terminus, the 427-residue chain is Enolase (427 aa).

Glutamine 163 serves as a coordination point for (2R)-2-phosphoglycerate. The Proton donor role is filled by glutamate 205. The Mg(2+) site is built by aspartate 242, glutamate 285, and aspartate 312. Positions 337, 366, 367, and 388 each coordinate (2R)-2-phosphoglycerate. Lysine 337 serves as the catalytic Proton acceptor.

Belongs to the enolase family. Requires Mg(2+) as cofactor.

The protein localises to the cytoplasm. The protein resides in the secreted. Its subcellular location is the cell surface. The catalysed reaction is (2R)-2-phosphoglycerate = phosphoenolpyruvate + H2O. Its pathway is carbohydrate degradation; glycolysis; pyruvate from D-glyceraldehyde 3-phosphate: step 4/5. Functionally, catalyzes the reversible conversion of 2-phosphoglycerate (2-PG) into phosphoenolpyruvate (PEP). It is essential for the degradation of carbohydrates via glycolysis. This Beijerinckia indica subsp. indica (strain ATCC 9039 / DSM 1715 / NCIMB 8712) protein is Enolase.